Reading from the N-terminus, the 160-residue chain is Large ribosomal subunit protein uL15 (160 aa).

Residues 1-13 are compositionally biased toward basic and acidic residues; that stretch reads MKLHELSDNDGAA. The interval 1–42 is disordered; the sequence is MKLHELSDNDGAAKKRKRVGRGPGSGTGKMGGRGIKGQKSRS. Residues 21–35 are compositionally biased toward gly residues; it reads RGPGSGTGKMGGRGI.

The protein belongs to the universal ribosomal protein uL15 family. In terms of assembly, part of the 50S ribosomal subunit.

Binds to the 23S rRNA. In Roseobacter denitrificans (strain ATCC 33942 / OCh 114) (Erythrobacter sp. (strain OCh 114)), this protein is Large ribosomal subunit protein uL15.